Here is a 147-residue protein sequence, read N- to C-terminus: Large ribosomal subunit protein bL9 (147 aa).

It belongs to the bacterial ribosomal protein bL9 family.

In terms of biological role, binds to the 23S rRNA. The sequence is that of Large ribosomal subunit protein bL9 from Phocaeicola vulgatus (strain ATCC 8482 / DSM 1447 / JCM 5826 / CCUG 4940 / NBRC 14291 / NCTC 11154) (Bacteroides vulgatus).